A 302-amino-acid chain; its full sequence is Oxaloacetate decarboxylase 2 (302 aa).

Substrate is bound at residue serine 50. Aspartate 88 lines the Mg(2+) pocket. Residues arginine 159 and histidine 235 each contribute to the substrate site.

This sequence belongs to the isocitrate lyase/PEP mutase superfamily. Oxaloacetate decarboxylase family. As to quaternary structure, homotetramer; dimer of dimers. Mg(2+) is required as a cofactor.

It catalyses the reaction oxaloacetate + H(+) = pyruvate + CO2. In terms of biological role, catalyzes the decarboxylation of oxaloacetate into pyruvate. Seems to play a role in maintaining cellular concentrations of bicarbonate and pyruvate. The sequence is that of Oxaloacetate decarboxylase 2 from Pseudomonas putida (strain W619).